Here is a 603-residue protein sequence, read N- to C-terminus: DNA mismatch repair protein MutL (603 aa).

The interval 361 to 383 (KETPTLFSKPTIPEYVPSDEDAP) is disordered.

It belongs to the DNA mismatch repair MutL/HexB family.

In terms of biological role, this protein is involved in the repair of mismatches in DNA. It is required for dam-dependent methyl-directed DNA mismatch repair. May act as a 'molecular matchmaker', a protein that promotes the formation of a stable complex between two or more DNA-binding proteins in an ATP-dependent manner without itself being part of a final effector complex. In Listeria monocytogenes serotype 4b (strain CLIP80459), this protein is DNA mismatch repair protein MutL.